We begin with the raw amino-acid sequence, 215 residues long: Adenylate kinase (215 aa).

Position 10-15 (10-15 (GAGKGT)) interacts with ATP. Residues 30–58 (STGDMLREAKRSGTLEKRYLDIMDSGGLL) form an NMP region. AMP contacts are provided by residues T31, R36, 56 to 58 (GLL), 84 to 87 (GFPR), and Q91. Residues 128-158 (HRRTDKRSGQIYHLVYNPPPPGAELEHRADD) are LID. ATP is bound by residues R129 and 138-139 (IY). Residues R155 and R166 each contribute to the AMP site. An ATP-binding site is contributed by G194.

Belongs to the adenylate kinase family. As to quaternary structure, monomer.

It is found in the cytoplasm. The catalysed reaction is AMP + ATP = 2 ADP. It functions in the pathway purine metabolism; AMP biosynthesis via salvage pathway; AMP from ADP: step 1/1. Its function is as follows. Catalyzes the reversible transfer of the terminal phosphate group between ATP and AMP. Plays an important role in cellular energy homeostasis and in adenine nucleotide metabolism. The protein is Adenylate kinase of Sorangium cellulosum (strain So ce56) (Polyangium cellulosum (strain So ce56)).